We begin with the raw amino-acid sequence, 963 residues long: MVELPDLLTDLFRRHRGRTALRTAGRTWTYEELDRVTSALARRIDAECPAGRRVLVAGEHTAEAVVWALAAMRSHAVHTPMNPGLPADRFEEFARVADAALLVCFEREALVRGEKAGLRALYAGDVGWPTDPAPAPADGTADEPARSRVAYSIFTSGSTGDPKLVDVGHGGLLNLCRSLRRLLDITPDDQVLHFASLSFDASVSEILGTLYAGATLVVPVRDQASWLGSVSRHLAAHGCDLAMLSPSVYARLDEAARSRIRKVEFCGEALGEGEYDKAARYSRVFNAYGPTEATVCFSLAELTSYTPSIGTPVDGFRAYVRDPDSGDHATAGTGELVIVGDGVALGYAGGSPAENEVFGTVDGSPAYATGDVVSLSDDGELTYLGRIDEQIKRLGHRVNLAHVGSTLSRHLGREVALVRQDATILLVTAADGEATEESLMARIRDLVPVWEAPDRLVLVDALPLTSGGKVDRSALRELLASPAGAPHGGTDGEDAAELRRVLDVVTAVLGQEIGPETSIFDAGGSSLAMIQIQVKLSDAYGEEAVEAAFAAMDYDFAPAAFLRHLRGEAVAPAESAVDTLLRRVETERDALRAELPLLRRDTRHEPVPGAADGDREVLLTGASGFIGGHVLDRLLAAGRPVLVVSTGDPDGVLTGHATRFGRQAADYARVRAISYAELERWVDRRRGPVVDAVVHCGYQVNHLLPLDSHLSGSVRNTALVVRAAAALGARSFAFLSAASAGADFLPLSAATLTAVGDPYSRSKLISEEYVNTLAVLGCAVSHYRPGLVYGHRPEDRHHLKDDWFTALLETARRVGAMPRLSGHVPVCDVGTLADTLLGRPDANPGTADGASRTPDSRSAVVVHRTYALDELLRHTGLTEADVLAPAAWFERVRDGGEVPAPLLAAMQAALSGPGWPSAHREVDHDILGRLLGTPPDTPAGDRPERTGTTAEAQNGAAHAPTPR.

The Carrier domain occupies 492-568; that stretch reads GEDAAELRRV…AAFLRHLRGE (77 aa). Residue Ser526 is modified to O-(pantetheine 4'-phosphoryl)serine. The disordered stretch occupies residues 928 to 963; the sequence is GRLLGTPPDTPAGDRPERTGTTAEAQNGAAHAPTPR.

Belongs to the ATP-dependent AMP-binding enzyme family. Pantetheine 4'-phosphate serves as cofactor.

It carries out the reaction 4-amino-L-phenylalanine + holo-[peptidyl-carrier protein] + ATP = 4-amino-L-phenylalanyl-[peptidyl-carrier protein] + AMP + diphosphate. The protein operates within antibiotic biosynthesis. In terms of biological role, involved in chloramphenicol biosynthesis. Activates 4-amino-L-phenylalanine by adenylation and loads it onto its peptidyl carrier domain, via a thioester linkage to the phosphopanthetheine moiety. Can also adenylate tyrosine and phenylalanine at low rates, but not L-p-nitrophenylalanine or threo-phenylserine. This chain is Non-ribosomal peptide synthetase CmlP, found in Streptomyces venezuelae (strain ATCC 10712 / CBS 650.69 / DSM 40230 / JCM 4526 / NBRC 13096 / PD 04745).